Here is a 381-residue protein sequence, read N- to C-terminus: 3-isopropylmalate dehydrogenase (381 aa).

Substrate-binding residues include Arg-104, Arg-114, Arg-142, and Asp-232. The Mg(2+) site is built by Asp-232, Asp-256, and Asp-260. 290-302 serves as a coordination point for NAD(+); the sequence is GSAPDIAGQDKAN.

It belongs to the isocitrate and isopropylmalate dehydrogenases family. LeuB type 1 subfamily. As to quaternary structure, homodimer. Requires Mg(2+) as cofactor. It depends on Mn(2+) as a cofactor.

The protein resides in the cytoplasm. It catalyses the reaction (2R,3S)-3-isopropylmalate + NAD(+) = 4-methyl-2-oxopentanoate + CO2 + NADH. It participates in amino-acid biosynthesis; L-leucine biosynthesis; L-leucine from 3-methyl-2-oxobutanoate: step 3/4. Catalyzes the oxidation of 3-carboxy-2-hydroxy-4-methylpentanoate (3-isopropylmalate) to 3-carboxy-4-methyl-2-oxopentanoate. The product decarboxylates to 4-methyl-2 oxopentanoate. This is 3-isopropylmalate dehydrogenase from Synechococcus sp. (strain JA-3-3Ab) (Cyanobacteria bacterium Yellowstone A-Prime).